The sequence spans 97 residues: uncharacterized protein (97 aa).

This is an uncharacterized protein from Escherichia coli O6:K15:H31 (strain 536 / UPEC).